Here is a 604-residue protein sequence, read N- to C-terminus: Replication protein A 70 kDa DNA-binding subunit B (604 aa).

Residues 170–256 constitute a DNA-binding region (OB); it reads WTIKVRVTNK…QNDYEMTLNE (87 aa). The C4-type zinc-finger motif lies at 468 to 488; the sequence is CKTCNKKVTEAMDSGYWCESC.

This sequence belongs to the replication factor A protein 1 family. In terms of assembly, heterotrimer of RPA1, RPA2 and RPA3 (canonical replication protein A complex).

It is found in the nucleus. In terms of biological role, component of the replication protein A complex (RPA) required for DNA recombination, repair and replication. The activity of RPA is mediated by single-stranded DNA binding and protein interactions. Probably involved in repair of double-strand DNA breaks (DSBs) induced by genotoxic stresses. This Arabidopsis thaliana (Mouse-ear cress) protein is Replication protein A 70 kDa DNA-binding subunit B (RPA1B).